A 240-amino-acid polypeptide reads, in one-letter code: Adiponectin (240 aa).

Residues 1 to 17 (MLLQGALLLLLALPSHG) form the signal peptide. Position 28 is a 5-hydroxylysine (Lys28). A glycan (O-linked (Gal...) hydroxylysine) is linked at Lys28. Residues 29-100 (GACAGWMAGI…GTPGRKGEPG (72 aa)) form a disordered region. Residue Cys31 is modified to S-(2-succinyl)cysteine. 4-hydroxyproline occurs at positions 39, 42, and 48. Residues 43–102 (GHNGTPGRDGRDGTPGEKGEKGDPGLVGPKGDTGETGITGIEGPRGFPGTPGRKGEPGES) enclose the Collagen-like domain. The segment covering 50 to 65 (RDGRDGTPGEKGEKGD) has biased composition (basic and acidic residues). 5-hydroxylysine occurs at positions 60, 63, and 72. Residues Lys60, Lys63, and Lys72 are each glycosylated (O-linked (Gal...) hydroxylysine). At Pro86 the chain carries 4-hydroxyproline. Lys96 bears the 5-hydroxylysine mark. An O-linked (Gal...) hydroxylysine glycan is attached at Lys96. Residues 103–240 (AYVYRSAFSV…GFLLYHNIVE (138 aa)) form the C1q domain.

Homomultimer. Forms trimers, hexamers and 12- to 18-mers. The trimers (low molecular weight complexes / LMW) are assembled via non-covalent interactions of the collagen-like domains in a triple helix and hydrophobic interactions within the globular C1q domain. Several trimers can associate to form disulfide-linked hexamers (middle molecular weight complexes / MMW) and larger complexes (higher molecular weight / HMW). The HMW-complex assembly is also modulated by the degree of lysine hydroxylation and glycosylation. LMW, MMW and HMW complexes bind to HBEGF, MMW and HMW complexes bind to PDGFB, and HMW complex binds to FGF2. Interacts with CTRP9 via the C1q domain (heterotrimeric complex). HMW complexes are more extensively glycosylated than smaller oligomers. Hydroxylation and glycosylation of the lysine residues within the collagen-like domain of adiponectin seem to be critically involved in regulating the formation and/or secretion of HMW complexes and consequently contribute to the insulin-sensitizing activity of adiponectin in hepatocytes. In terms of processing, O-glycosylated. O-linked glycans on hydroxylysine residues consist of Glc-Gal disaccharides bound to the oxygen atom of post-translationally added hydroxyl groups. O-linked glycosylations elsewhere disialylated with the structure Neu5Acalpha2-&gt;8Neu5Acalpha2-&gt;3Gal. Sialylated by alpha 2,8-sialyltransferase III. Desialylated forms are rapidly cleared from the circulation. Not N-glycosylated. Post-translationally, succination of Cys-31 by the Krebs cycle intermediate fumarate, which leads to S-(2-succinyl)cysteine residues, inhibits polymerization and secretion of adiponectin. Adiponectin is a major target for succination in both adipocytes and adipose tissue of diabetic mammals. It was proposed that succination of proteins is a biomarker of mitochondrial stress and accumulation of Krebs cycle intermediates in adipose tissue in diabetes and that succination of adiponectin may contribute to the decrease in plasma adiponectin in diabetes.

The protein resides in the secreted. Its activity is regulated as follows. Polymerization and secretion of adiponectin is inhibited by succination of cysteine residues by the Krebs cycle intermediate fumarate, which leads to S-(2-succinyl)cysteine residues. Important adipokine involved in the control of fat metabolism and insulin sensitivity, with direct anti-diabetic, anti-atherogenic and anti-inflammatory activities. Stimulates AMPK phosphorylation and activation in the liver and the skeletal muscle, enhancing glucose utilization and fatty-acid combustion. Antagonizes TNF-alpha by negatively regulating its expression in various tissues such as liver and macrophages, and also by counteracting its effects. Inhibits endothelial NF-kappa-B signaling through a cAMP-dependent pathway. May play a role in cell growth, angiogenesis and tissue remodeling by binding and sequestering various growth factors with distinct binding affinities, depending on the type of complex, LMW, MMW or HMW. The polypeptide is Adiponectin (ADIPOQ) (Bos taurus (Bovine)).